A 218-amino-acid chain; its full sequence is Peroxiredoxin-like 2A (218 aa).

The interval 3 to 101 (MWSIGAGAIG…DELGVPLYAV (99 aa)) is thioredoxin fold. Catalysis depends on redox-active residues cysteine 74 and cysteine 77.

Belongs to the peroxiredoxin-like PRXL2 family. PRXL2A subfamily.

It localises to the cytoplasm. The protein localises to the secreted. Its function is as follows. Involved in redox regulation of the cell. Acts as an antioxidant. Inhibits TNFSF11-induced NFKB1 and JUN activation and osteoclast differentiation. May affect bone resorption and help to maintain bone mass. Acts as a negative regulator of macrophage-mediated inflammation by inhibiting macrophage production of inflammatory cytokines, probably through suppression of the MAPK signaling pathway. This is Peroxiredoxin-like 2A (PRXL2A) from Bos taurus (Bovine).